Here is a 431-residue protein sequence, read N- to C-terminus: MSASALDAFFGARLADTDPDLFAALEKEFHRQEDGIELIASENIVSAAVLEAQGSVLTNKYAEGYPGKRYYGGCAAVDIAEQLAIDRAKQLFGCEFANVQPHSGAQANGAVFFALAKPGDTILGMSLAAGGHLTHGAAPTVSGKWFNAVQYGVRKEDGLLDYEELEALAREHKPKIIIAGGSAYPRFIDFPRIRKVADEVGAYFMVDMAHFAGLVAAGIYPSPLPHAHVVTTTTHKTLRGPRGGMILTNDLELGKKFNTAVFPGLQGGPLMHVIAAKAVAFGEALKPDFKTYQQSVANNAKVLASTLVERGLAIVSGGTDTHLMLVDLRPKNVTGKATDESLGRAHITTNKNAIPFDPQKPAVTSGIRLGTPAGTSRGFGEAEFREIGLMIDRVVEGLSKAGENGSNEAVEQEVGAEVKALCKRFPLYRNH.

(6S)-5,6,7,8-tetrahydrofolate-binding positions include Leu-127 and 131 to 133 (GHL). Position 236 is an N6-(pyridoxal phosphate)lysine (Lys-236).

Belongs to the SHMT family. As to quaternary structure, homodimer. It depends on pyridoxal 5'-phosphate as a cofactor.

The protein resides in the cytoplasm. The enzyme catalyses (6R)-5,10-methylene-5,6,7,8-tetrahydrofolate + glycine + H2O = (6S)-5,6,7,8-tetrahydrofolate + L-serine. It participates in one-carbon metabolism; tetrahydrofolate interconversion. It functions in the pathway amino-acid biosynthesis; glycine biosynthesis; glycine from L-serine: step 1/1. Catalyzes the reversible interconversion of serine and glycine with tetrahydrofolate (THF) serving as the one-carbon carrier. This reaction serves as the major source of one-carbon groups required for the biosynthesis of purines, thymidylate, methionine, and other important biomolecules. Also exhibits THF-independent aldolase activity toward beta-hydroxyamino acids, producing glycine and aldehydes, via a retro-aldol mechanism. The chain is Serine hydroxymethyltransferase from Granulibacter bethesdensis (strain ATCC BAA-1260 / CGDNIH1).